Here is a 306-residue protein sequence, read N- to C-terminus: MEITFFGTGAALPTKERNTQAIALNLDPYSNSIWLFDAGEGTQHQILHHSIKLGKINHIFITHMHGDHIYGLPGLLTSRSFQGGENKPLTIVGPRGIKNYVETTLQASLSRLNYPVTFIEIDDQLHYHHEGFTVSAYNLNHGVPSFGYRIEAPTTSGKIDVASLREIGMEPGPKYQEVKNSDSFIFNDKVYQSSDFKGEEKVGPKIAIFGDTMPCENELKLADNADLLVHEATYIDGDRSLADSHHHSHINDVLHLLEATNSKQALLNHISNRYNLSDIDVIYAELQNQYPNLKFKFVRDFDTFEI.

Positions 63, 65, 67, 68, 141, 211, and 269 each coordinate Zn(2+). Catalysis depends on aspartate 67, which acts as the Proton acceptor.

The protein belongs to the RNase Z family. In terms of assembly, homodimer. Zn(2+) is required as a cofactor.

The enzyme catalyses Endonucleolytic cleavage of RNA, removing extra 3' nucleotides from tRNA precursor, generating 3' termini of tRNAs. A 3'-hydroxy group is left at the tRNA terminus and a 5'-phosphoryl group is left at the trailer molecule.. Zinc phosphodiesterase, which displays some tRNA 3'-processing endonuclease activity. Probably involved in tRNA maturation, by removing a 3'-trailer from precursor tRNA. In Staphylococcus carnosus (strain TM300), this protein is Ribonuclease Z.